Reading from the N-terminus, the 688-residue chain is MAKKKGDQYDSDGAEDQDYDEEPVFEDPAGFVDDVGDDELLGDFLKQKPCESDGVENVIVVDNIPVVGPARFPKLQGVLEKIFKNAGTIVNIHYPKDDEENTKGFAFIEFKNPEMAEEAVKAFNNYRLDKSHTLLVNLFSDFQKYSDIPKDWSPPESQPYKVQNDLYTFLSEPDAQDQFCVVAESTPGAVQVQFWHNTQPEPVELLTRERFTETYVKWSPLGTYIVTFHKQGVVIWGGSSFTKINKFAHSNTQYVDFSPCEQYLVTYGPNGQKIIIWDIRTGTEKRSFVSDGSSNMSMFRWSHDDKYVARMGDNAIHVYETNTFYLLDKKSIKVQGIRNFSWSPTDNIIAYWMSEDIDAPARVTLLEIPKKIEVRNKNLFNVADCKIHWQKSGDYLCVKVDRYSKSKKDKKDADVKFLGMFYNFEIFHMREKDIPVDSVEVKETILAFAWEPVGSKFSIIHGEPSNANVSFYEAKKGQEPTMLRKMEKKVCSHLFWSPRGQFIVLANLQMGSFEFVDTNDFTIMKSGDHYRASEVEWDPTGRYVVTGTSGKVKEDHGYHLWSFQGRILKRVNLKNFMLFLWRPRPPTLLPDERQKEIRKNLKKYYAQFESKDRVRMTRASKELLEKRAKLREQFVEYRAKRVNDWEEQKYRRMQLRNNMDTDTLEADPDNVEEEIVEILVREDTTLLE.

Residues 1 to 28 (MAKKKGDQYDSDGAEDQDYDEEPVFEDP) form a disordered region. Residues 9-25 (YDSDGAEDQDYDEEPVF) show a composition bias toward acidic residues. Residues 57–141 (NVIVVDNIPV…HTLLVNLFSD (85 aa)) form the RRM domain. WD repeat units lie at residues 208 to 246 (RERF…KINK), 247 to 287 (FAHS…EKRS), 291 to 329 (DGSS…LLDK), 332 to 367 (IKVQ…TLLE), 440 to 482 (EVKE…EPTM), and 527 to 572 (GDHY…KRVN). The stretch at 612–643 (DRVRMTRASKELLEKRAKLREQFVEYRAKRVN) forms a coiled coil.

This sequence belongs to the eIF-3 subunit B family. In terms of assembly, component of the eukaryotic translation initiation factor 3 (eIF-3) complex.

The protein resides in the cytoplasm. Its function is as follows. RNA-binding component of the eukaryotic translation initiation factor 3 (eIF-3) complex, which is involved in protein synthesis of a specialized repertoire of mRNAs and, together with other initiation factors, stimulates binding of mRNA and methionyl-tRNAi to the 40S ribosome. The eIF-3 complex specifically targets and initiates translation of a subset of mRNAs involved in cell proliferation. In Culex quinquefasciatus (Southern house mosquito), this protein is Eukaryotic translation initiation factor 3 subunit B.